The primary structure comprises 88 residues: Small ribosomal subunit protein uS19 (88 aa).

The protein belongs to the universal ribosomal protein uS19 family.

Its function is as follows. Protein S19 forms a complex with S13 that binds strongly to the 16S ribosomal RNA. This Carsonella ruddii (strain PV) protein is Small ribosomal subunit protein uS19.